Reading from the N-terminus, the 550-residue chain is Chaperonin GroEL (550 aa).

ATP is bound by residues T30–P33, K51, D87–T91, G415, N479–A481, and D495.

Belongs to the chaperonin (HSP60) family. As to quaternary structure, forms a cylinder of 14 subunits composed of two heptameric rings stacked back-to-back. Interacts with the co-chaperonin GroES.

Its subcellular location is the cytoplasm. The catalysed reaction is ATP + H2O + a folded polypeptide = ADP + phosphate + an unfolded polypeptide.. In terms of biological role, together with its co-chaperonin GroES, plays an essential role in assisting protein folding. The GroEL-GroES system forms a nano-cage that allows encapsulation of the non-native substrate proteins and provides a physical environment optimized to promote and accelerate protein folding. The chain is Chaperonin GroEL from Polaromonas sp. (strain JS666 / ATCC BAA-500).